Here is a 446-residue protein sequence, read N- to C-terminus: Alpha-1,6-mannosyl-glycoprotein 2-beta-N-acetylglucosaminyltransferase (446 aa).

Over Met1–Lys9 the chain is Cytoplasmic. The helical; Signal-anchor for type II membrane protein transmembrane segment at Val10–Gly29 threads the bilayer. Topologically, residues Arg30 to Gln446 are lumenal. N-linked (GlcNAc...) asparagine glycans are attached at residues Asn69 and Asn86. Substrate-binding positions include Gln123–Arg127 and Asp154. Cys196 and Cys210 are oxidised to a cystine. Residue Gln229–His233 coordinates substrate. Residue Asp261 coordinates Mn(2+). An intrachain disulfide couples Cys283 to Cys286. Arg298 contributes to the substrate binding site. 3 disulfides stabilise this stretch: Cys334/Cys357, Cys339/Cys439, and Cys378/Cys386. His374 serves as a coordination point for Mn(2+).

This sequence belongs to the glycosyltransferase 16 (GT16) protein family. In terms of assembly, homodimer. Mn(2+) serves as cofactor.

The protein resides in the golgi apparatus membrane. It carries out the reaction an N(4)-{beta-D-GlcNAc-(1-&gt;2)-alpha-D-Man-(1-&gt;3)-[alpha-D-Man-(1-&gt;6)]-beta-D-Man-(1-&gt;4)-beta-D-GlcNAc-(1-&gt;4)-beta-D-GlcNAc}-L-asparaginyl-[protein] + UDP-N-acetyl-alpha-D-glucosamine = N(4)-{beta-D-GlcNAc-(1-&gt;2)-alpha-D-Man-(1-&gt;3)-[beta-D-GlcNAc-(1-&gt;2)-alpha-D-Man-(1-&gt;6)]-beta-D-Man-(1-&gt;4)-beta-D-GlcNAc-(1-&gt;4)-beta-D-GlcNAc}-L-asparaginyl-[protein] + UDP + H(+). Its pathway is protein modification; protein glycosylation. Functionally, plays an essential role in protein N-glycosylation. Catalyzes the transfer of N-acetylglucosamine (GlcNAc) onto the free terminal mannose moiety in the core structure of the nascent N-linked glycan chain, giving rise to the second branch in complex glycans. This is Alpha-1,6-mannosyl-glycoprotein 2-beta-N-acetylglucosaminyltransferase (MGAT2) from Sus scrofa (Pig).